Consider the following 297-residue polypeptide: Tyrosine recombinase XerD (297 aa).

The 86-residue stretch at 1 to 86 (MNDLIEDFLH…SLRSFFHYLM (86 aa)) folds into the Core-binding (CB) domain. Residues 107–291 (GLPKVLNLDD…TKLRLKDVYK (185 aa)) enclose the Tyr recombinase domain. Active-site residues include arginine 147, lysine 171, histidine 243, arginine 246, and histidine 269. Catalysis depends on tyrosine 278, which acts as the O-(3'-phospho-DNA)-tyrosine intermediate.

This sequence belongs to the 'phage' integrase family. XerD subfamily. Forms a cyclic heterotetrameric complex composed of two molecules of XerC and two molecules of XerD.

The protein localises to the cytoplasm. Site-specific tyrosine recombinase, which acts by catalyzing the cutting and rejoining of the recombining DNA molecules. The XerC-XerD complex is essential to convert dimers of the bacterial chromosome into monomers to permit their segregation at cell division. It also contributes to the segregational stability of plasmids. The chain is Tyrosine recombinase XerD from Listeria monocytogenes serovar 1/2a (strain ATCC BAA-679 / EGD-e).